Consider the following 365-residue polypeptide: Coxsackievirus and adenovirus receptor homolog (365 aa).

The first 19 residues, 1–19 (MALLLCFVLLCGVADFTSS), serve as a signal peptide directing secretion. 2 Ig-like C2-type domains span residues 20 to 136 (LSIT…FLLT) and 141 to 228 (PSGT…LRLD). The Extracellular portion of the chain corresponds to 20 to 238 (LSITTPEQRI…VVPPSNRAGT (219 aa)). Disulfide bonds link Cys-41-Cys-120, Cys-146-Cys-223, and Cys-162-Cys-212. Asn-106 is a glycosylation site (N-linked (GlcNAc...) asparagine). A helical membrane pass occupies residues 239–259 (IAGAVIGTLLALVLIGAILFC). Residues Cys-259 and Cys-260 are each lipidated (S-palmitoyl cysteine). Topologically, residues 260–365 (CHKKRREEKY…PAQSKDGSIV (106 aa)) are cytoplasmic. Over residues 269–282 (YEKEVHHDIREDVP) the composition is skewed to basic and acidic residues. Residues 269–315 (YEKEVHHDIREDVPPPKSRTSTARSYIGSNHSSLGSMSPSNMEGYSK) form a disordered region. Over residues 286 to 315 (SRTSTARSYIGSNHSSLGSMSPSNMEGYSK) the composition is skewed to polar residues. Residues Ser-297, Ser-304, Ser-306, Ser-323, Ser-332, and Ser-363 each carry the phosphoserine modification. Positions 360-365 (KDGSIV) match the PDZ-binding motif.

In terms of assembly, monomer. May form homodimer. Interacts with LNX, MAGI1, DLG4, PRKCABP, TJP1 and CTNNB1. Interacts with MPDZ; recruits MPDZ to intercellular contact sites. Interacts with JAML (homodimeric form). Post-translationally, N-glycosylated. In terms of processing, palmitoylated on Cys-259 and/or Cys-260; required for proper localization to the plasma membrane. As to expression, expressed in heart, brain, spleen, lung, liver, muscle, kidney, testis, spleen and skeletal muscle.

The protein localises to the cell membrane. It localises to the basolateral cell membrane. Its subcellular location is the cell junction. It is found in the tight junction. The protein resides in the adherens junction. Component of the epithelial apical junction complex that may function as a homophilic cell adhesion molecule and is essential for tight junction integrity. Also involved in transepithelial migration of leukocytes through adhesive interactions with JAML a transmembrane protein of the plasma membrane of leukocytes. The interaction between both receptors also mediates the activation of gamma-delta T-cells, a subpopulation of T-cells residing in epithelia and involved in tissue homeostasis and repair. Upon epithelial CXADR-binding, JAML induces downstream cell signaling events in gamma-delta T-cells through PI3-kinase and MAP kinases. It results in proliferation and production of cytokines and growth factors by T-cells that in turn stimulate epithelial tissues repair. The protein is Coxsackievirus and adenovirus receptor homolog (Cxadr) of Rattus norvegicus (Rat).